A 305-amino-acid chain; its full sequence is Mitochondrial uncoupling protein 3 (305 aa).

Solcar repeat units lie at residues 14-100 (TRIL…LKGL), 112-204 (LPLA…AKHF), and 213-299 (DNIF…FRLL). The next 6 membrane-spanning stretches (helical) occupy residues 16-36 (ILLASLSAMVAESVTFPIDLT), 69-89 (VIGLYKGLSPAIIRHLFYTPI), 118-138 (ALVGGFSGVIAQVVASPADLV), 178-198 (KGVLPNIQRAFLVNMGELACY), 219-239 (TLASIMSGLASTSLSCPADVV), and 272-292 (WKGFFPTWARLGPWQFVFWVS).

It belongs to the mitochondrial carrier (TC 2.A.29) family.

It localises to the mitochondrion inner membrane. Functionally, PUMPS are mitochondrial transporter proteins that create proton leaks across the inner mitochondrial membrane, thus uncoupling oxidative phosphorylation. This leads to a decrease in the efficiency of oxidative phosphorylation and an increase in heat production. May be involved in protecting plant cells against oxidative stress damage. This is Mitochondrial uncoupling protein 3 (PUMP3) from Arabidopsis thaliana (Mouse-ear cress).